Reading from the N-terminus, the 63-residue chain is Arabinogalactan protein 22 (63 aa).

Residues 1-27 (MASLKFPLEILAVFVIISVILLPIAQS) form the signal peptide. Residues P32, P34, and P36 each carry the 4-hydroxyproline modification. O-linked (Ara...) hydroxyproline glycosylation is found at P32, P34, and P36. Residue S38 is the site of GPI-anchor amidated serine attachment. The propeptide at 39-63 (DGTSIDQGIAYVLMMVALALTYFIH) is removed in mature form.

It belongs to the AG-peptide AGP family. In terms of processing, contains 4-hydroxyproline; hydroxylated on Pro-32, Pro-34 and Pro-36. Post-translationally, O-glycosylated on hydroxyprolines; noncontiguous hydroxylproline residues are glycosylated with arabinogalactan.

The protein resides in the cell membrane. Functionally, proteoglycan that seems to be implicated in diverse developmental roles such as differentiation, cell-cell recognition, embryogenesis and programmed cell death. This chain is Arabinogalactan protein 22, found in Arabidopsis thaliana (Mouse-ear cress).